Reading from the N-terminus, the 273-residue chain is Light-independent protochlorophyllide reductase iron-sulfur ATP-binding protein (273 aa).

Residues 12–17 (GIGKST) and K41 contribute to the ATP site. S16 is a Mg(2+) binding site. 2 residues coordinate [4Fe-4S] cluster: C97 and C131. Residue 182–183 (NR) participates in ATP binding.

This sequence belongs to the NifH/BchL/ChlL family. As to quaternary structure, homodimer. Protochlorophyllide reductase is composed of three subunits; BchL, BchN and BchB. It depends on [4Fe-4S] cluster as a cofactor.

It catalyses the reaction chlorophyllide a + oxidized 2[4Fe-4S]-[ferredoxin] + 2 ADP + 2 phosphate = protochlorophyllide a + reduced 2[4Fe-4S]-[ferredoxin] + 2 ATP + 2 H2O. Its pathway is porphyrin-containing compound metabolism; bacteriochlorophyll biosynthesis (light-independent). In terms of biological role, component of the dark-operative protochlorophyllide reductase (DPOR) that uses Mg-ATP and reduced ferredoxin to reduce ring D of protochlorophyllide (Pchlide) to form chlorophyllide a (Chlide). This reaction is light-independent. The L component serves as a unique electron donor to the NB-component of the complex, and binds Mg-ATP. The sequence is that of Light-independent protochlorophyllide reductase iron-sulfur ATP-binding protein from Chloroflexus aurantiacus (strain ATCC 29364 / DSM 637 / Y-400-fl).